The following is a 387-amino-acid chain: Probable protein phosphatase 2C 25 (387 aa).

Positions 52-351 (EFSFAVVQAN…DDITVVVVYI (300 aa)) constitute a PPM-type phosphatase domain. Mn(2+)-binding residues include Asp-83, Gly-84, Asp-283, and Asp-342.

Belongs to the PP2C family. Mg(2+) is required as a cofactor. It depends on Mn(2+) as a cofactor.

It catalyses the reaction O-phospho-L-seryl-[protein] + H2O = L-seryl-[protein] + phosphate. It carries out the reaction O-phospho-L-threonyl-[protein] + H2O = L-threonyl-[protein] + phosphate. The chain is Probable protein phosphatase 2C 25 from Oryza sativa subsp. japonica (Rice).